The chain runs to 2266 residues: RNA1 polyprotein (2266 aa).

Over 566–1158 the chain is Cytoplasmic; sequence LCTALAAGIF…AGRDYLVQNG (593 aa). The SF3 helicase domain occupies 751–917; it reads MKDLVELHKR…PGVIYDPENP (167 aa). 781 to 788 is a binding site for ATP; the sequence is GQRHCGKS. A helical transmembrane segment spans residues 1159-1179; that stretch reads CGILMIAAALILILVSGWGFW. Residues 1180 to 1205 are Lumenal-facing; sequence KLFVGLFSGTMSLGAAITGMSAVDIK. The region spanning 1229 to 1438 is the Peptidase C3 domain; the sequence is AYARSQAGDG…WADIMPPNSL (210 aa). Catalysis depends on for picornain 3C-like protease activity residues His1272, Glu1310, and Cys1402. In terms of domain architecture, RdRp catalytic spans 1715 to 1843; it reads NEAINCDYSG…SVSPSIASWF (129 aa).

It belongs to the nepoviruses RNA1 polyprotein family. Specific enzymatic cleavages by picornain 3C-like protease in vivo yield mature proteins. Picornain 3C-like protease is autocatalytically processed. Post-translationally, VPg is uridylylated by the polymerase and is covalently linked to the 5'-end of genomic RNA. This uridylylated form acts as a nucleotide-peptide primer for the polymerase.

It localises to the host endoplasmic reticulum lumen. Its subcellular location is the host endoplasmic reticulum membrane. It carries out the reaction RNA(n) + a ribonucleoside 5'-triphosphate = RNA(n+1) + diphosphate. In terms of biological role, picornain 3C-like protease is a thiol protease that cleaves the P1 and P2 polyproteins. The polypeptide is RNA1 polyprotein (Tomato black ring virus (strain MJ) (TBRV)).